Reading from the N-terminus, the 109-residue chain is Nucleoid-associated protein VV1_2004 (109 aa).

The protein belongs to the YbaB/EbfC family. As to quaternary structure, homodimer.

The protein resides in the cytoplasm. Its subcellular location is the nucleoid. Binds to DNA and alters its conformation. May be involved in regulation of gene expression, nucleoid organization and DNA protection. The polypeptide is Nucleoid-associated protein VV1_2004 (Vibrio vulnificus (strain CMCP6)).